A 272-amino-acid polypeptide reads, in one-letter code: Phosphatidylglycerol--prolipoprotein diacylglyceryl transferase (272 aa).

The next 7 helical transmembrane spans lie at 17–37, 55–75, 90–110, 125–145, 174–194, 202–222, and 230–250; these read LQVHWYGLMYLLAFLCAWGLA, LVFYGALGVVLGGRIGYVLFY, VWTGGMSFHGGFLGVMIAMLF, FIAPCVPTGLMFGRIGNFIGG, PSQIYQALCEGLLLFIILWWF, MAVSALFLMGYGVARFVMEFF, and GFILFGWMTKGQILTVPMLLI. R138 is an a 1,2-diacyl-sn-glycero-3-phospho-(1'-sn-glycerol) binding site.

The protein belongs to the Lgt family.

The protein resides in the cell inner membrane. The enzyme catalyses L-cysteinyl-[prolipoprotein] + a 1,2-diacyl-sn-glycero-3-phospho-(1'-sn-glycerol) = an S-1,2-diacyl-sn-glyceryl-L-cysteinyl-[prolipoprotein] + sn-glycerol 1-phosphate + H(+). It functions in the pathway protein modification; lipoprotein biosynthesis (diacylglyceryl transfer). In terms of biological role, catalyzes the transfer of the diacylglyceryl group from phosphatidylglycerol to the sulfhydryl group of the N-terminal cysteine of a prolipoprotein, the first step in the formation of mature lipoproteins. In Acinetobacter baumannii (strain ACICU), this protein is Phosphatidylglycerol--prolipoprotein diacylglyceryl transferase.